The following is a 292-amino-acid chain: Ribosomal protein L11 methyltransferase (292 aa).

Residues Thr136, Gly159, Asp181, and Asn228 each contribute to the S-adenosyl-L-methionine site.

It belongs to the methyltransferase superfamily. PrmA family.

Its subcellular location is the cytoplasm. The catalysed reaction is L-lysyl-[protein] + 3 S-adenosyl-L-methionine = N(6),N(6),N(6)-trimethyl-L-lysyl-[protein] + 3 S-adenosyl-L-homocysteine + 3 H(+). Functionally, methylates ribosomal protein L11. This is Ribosomal protein L11 methyltransferase from Rhizobium leguminosarum bv. trifolii (strain WSM2304).